The sequence spans 622 residues: Low affinity potassium transport system protein Kup (622 aa).

A run of 12 helical transmembrane segments spans residues 9-29 (LPAI…TSPL), 49-69 (VFGF…IKYL), 103-123 (VIMG…TPAI), 137-157 (PQLD…LFMI), 165-185 (VGKL…GLGL), 213-233 (VSFI…ALYA), 247-267 (WFTV…ALLL), 276-296 (PFFL…AALA), 337-357 (IYIP…IVSF), 363-383 (LAAA…ILST), 396-416 (FVAL…TANL), and 419-439 (LLSG…VMTT).

The protein belongs to the HAK/KUP transporter (TC 2.A.72) family.

The protein localises to the cell inner membrane. It carries out the reaction K(+)(in) + H(+)(in) = K(+)(out) + H(+)(out). In terms of biological role, responsible for the low-affinity transport of potassium into the cell. Likely operates as a K(+):H(+) symporter. This Escherichia coli O157:H7 (strain EC4115 / EHEC) protein is Low affinity potassium transport system protein Kup.